A 479-amino-acid polypeptide reads, in one-letter code: F-box protein At5g51380 (479 aa).

Positions M1–S20 are disordered. The F-box domain occupies D62–F108.

The sequence is that of F-box protein At5g51380 from Arabidopsis thaliana (Mouse-ear cress).